The chain runs to 156 residues: Ribonuclease 1B pancreatic (156 aa).

A signal peptide spans 1-28 (MALDKSVIPLPLLVVVLLVLGWAQPSLG). 2 residues coordinate substrate: K35 and R38. Catalysis depends on H40, which acts as the Proton acceptor. Intrachain disulfides connect C54–C112, C68–C123, C86–C138, and C93–C100. The N-linked (GlcNAc...) asparagine glycan is linked to N62. Residues 69-73 (KSVNT), K94, and R113 each bind substrate. N-linked (GlcNAc...) asparagine glycosylation occurs at N116. The active-site Proton donor is the H147.

Belongs to the pancreatic ribonuclease family. Monomer.

It is found in the secreted. It catalyses the reaction an [RNA] containing cytidine + H2O = an [RNA]-3'-cytidine-3'-phosphate + a 5'-hydroxy-ribonucleotide-3'-[RNA].. The enzyme catalyses an [RNA] containing uridine + H2O = an [RNA]-3'-uridine-3'-phosphate + a 5'-hydroxy-ribonucleotide-3'-[RNA].. Endonuclease that catalyzes the cleavage of RNA on the 3' side of pyrimidine nucleotides. Compared to RNASE1 it has lost activity towards dsRNA. This Pygathrix nemaeus (Red-shanked douc langur) protein is Ribonuclease 1B pancreatic (RNASE1B).